Here is a 147-residue protein sequence, read N- to C-terminus: Nucleoside diphosphate kinase (147 aa).

Positions 11, 59, 87, 93, 104, and 114 each coordinate ATP. The Pros-phosphohistidine intermediate role is filled by His-117.

The protein belongs to the NDK family. As to quaternary structure, homotetramer. Mg(2+) is required as a cofactor.

It localises to the cytoplasm. The enzyme catalyses a 2'-deoxyribonucleoside 5'-diphosphate + ATP = a 2'-deoxyribonucleoside 5'-triphosphate + ADP. It catalyses the reaction a ribonucleoside 5'-diphosphate + ATP = a ribonucleoside 5'-triphosphate + ADP. Functionally, major role in the synthesis of nucleoside triphosphates other than ATP. The ATP gamma phosphate is transferred to the NDP beta phosphate via a ping-pong mechanism, using a phosphorylated active-site intermediate. This Anaeromyxobacter sp. (strain K) protein is Nucleoside diphosphate kinase.